The chain runs to 62 residues: Temporin-1PLa (62 aa).

Residues 1 to 22 form the signal peptide; that stretch reads MFTSKKSLLLLFFLGTINLSLC. The propeptide occupies 23 to 45; sequence EEERDADEEERRDDPDEMNVEVE. Position 60 is an isoleucine amide (Ile-60).

Expressed by the skin glands.

It is found in the secreted. Antimicrobial activity against the Gram-positive bacterium S.aureus. The sequence is that of Temporin-1PLa from Lithobates palustris (Pickerel frog).